A 304-amino-acid polypeptide reads, in one-letter code: UDP-N-acetylenolpyruvoylglucosamine reductase (304 aa).

Residues 33-198 (KVGGPVDILL…LEVTFNLEKG (166 aa)) enclose the FAD-binding PCMH-type domain. Arginine 177 is a catalytic residue. Catalysis depends on serine 227, which acts as the Proton donor. Glutamate 297 is a catalytic residue.

The protein belongs to the MurB family. The cofactor is FAD.

The protein localises to the cytoplasm. It carries out the reaction UDP-N-acetyl-alpha-D-muramate + NADP(+) = UDP-N-acetyl-3-O-(1-carboxyvinyl)-alpha-D-glucosamine + NADPH + H(+). It participates in cell wall biogenesis; peptidoglycan biosynthesis. Its function is as follows. Cell wall formation. The sequence is that of UDP-N-acetylenolpyruvoylglucosamine reductase from Clostridium kluyveri (strain NBRC 12016).